The primary structure comprises 388 residues: MEGTPAANWSIELDLGSGVPPGAEGNLTAGPPRRNEALARVEVAVLCLILFLALSGNACVLLALRTTRHKHSRLFFFMKHLSIADLVVAVFQVLPQLLWDITFRFYGPDLLCRLVKYLQVVGMFASTYLLLLMSLDRCLAICQPLRSLRRRTDRLAVLATWLGCLVASVPQVHIFSLREVADGVFDCWAVFIQPWGPKAYVTWITLAVYIVPVIVLAACYGLISFKIWQNLRLKTAAAAAAAEGSDAAGGAGRAALARVSSVKLISKAKIRTVKMTFIIVLAFIVCWTPFFFVQMWSVWDVNAPKEASAFIIAMLLASLNSCCNPWIYMLFTGHLFHELVQRFLCCSARYLKGSRPGETSISKKSNSSTFVLSRRSSSQRSCSQPSSA.

Over 1–38 the chain is Extracellular; it reads MEGTPAANWSIELDLGSGVPPGAEGNLTAGPPRRNEAL. N-linked (GlcNAc...) asparagine glycans are attached at residues Asn-8 and Asn-26. A helical transmembrane segment spans residues 39 to 63; the sequence is ARVEVAVLCLILFLALSGNACVLLA. Residues 64–74 lie on the Cytoplasmic side of the membrane; the sequence is LRTTRHKHSRL. Residues 75–97 form a helical membrane-spanning segment; that stretch reads FFFMKHLSIADLVVAVFQVLPQL. The Extracellular portion of the chain corresponds to 98-113; that stretch reads LWDITFRFYGPDLLCR. Cys-112 and Cys-187 are joined by a disulfide. A helical membrane pass occupies residues 114–135; sequence LVKYLQVVGMFASTYLLLLMSL. Topologically, residues 136 to 154 are cytoplasmic; the sequence is DRCLAICQPLRSLRRRTDR. Residues 155-175 form a helical membrane-spanning segment; sequence LAVLATWLGCLVASVPQVHIF. Over 176–202 the chain is Extracellular; the sequence is SLREVADGVFDCWAVFIQPWGPKAYVT. Residues 203-225 form a helical membrane-spanning segment; it reads WITLAVYIVPVIVLAACYGLISF. At 226-274 the chain is on the cytoplasmic side; it reads KIWQNLRLKTAAAAAAAEGSDAAGGAGRAALARVSSVKLISKAKIRTVK. Residues 275–293 traverse the membrane as a helical segment; that stretch reads MTFIIVLAFIVCWTPFFFV. At 294–308 the chain is on the extracellular side; the sequence is QMWSVWDVNAPKEAS. The chain crosses the membrane as a helical span at residues 309–331; that stretch reads AFIIAMLLASLNSCCNPWIYMLF. Residues 332 to 388 are Cytoplasmic-facing; the sequence is TGHLFHELVQRFLCCSARYLKGSRPGETSISKKSNSSTFVLSRRSSSQRSCSQPSSA. The interval 354–388 is disordered; the sequence is SRPGETSISKKSNSSTFVLSRRSSSQRSCSQPSSA. 2 positions are modified to phosphoserine: Ser-365 and Ser-367. Low complexity predominate over residues 365–388; it reads SNSSTFVLSRRSSSQRSCSQPSSA.

This sequence belongs to the G-protein coupled receptor 1 family. Vasopressin/oxytocin receptor subfamily.

Its subcellular location is the cell membrane. Its function is as follows. Receptor for oxytocin. The activity of this receptor is mediated by G proteins which activate a phosphatidylinositol-calcium second messenger system. This is Oxytocin receptor (Oxtr) from Mus musculus (Mouse).